The following is a 726-amino-acid chain: Pyrroloquinoline quinone-dependent pyranose dehydrogenase (726 aa).

A signal peptide spans 1–18 (MRSSSLAWALGLVALANA). Heme b-binding residues include M83 and Y108. A disulfide bridge connects residues C138 and C141. N140 carries an N-linked (GlcNAc...) asparagine glycan. Residues R181 and H182 each contribute to the heme b site. The segment at 211 to 242 (PPLSGGAPTQPPTQQPPTTTAPPPPPPSSTFV) is disordered. Pro residues predominate over residues 219–238 (TQPPTQQPPTTTAPPPPPPS). C244 and C302 are oxidised to a cystine. Pyrroloquinoline quinone is bound by residues R273, H363, R430, and N431. The Ca(2+) site is built by S449 and D451. Residues C492 and C525 are joined by a disulfide bond. H539 is a pyrroloquinoline quinone binding site. Residue N551 is glycosylated (N-linked (GlcNAc...) asparagine). H560, W563, and N564 together coordinate pyrroloquinoline quinone. Cysteines 611 and 619 form a disulfide. Residue R621 participates in pyrroloquinoline quinone binding. Positions 659 to 678 (ITQPPITTSPPTPTTPPVVQ) are enriched in pro residues. The tract at residues 659–689 (ITQPPITTSPPTPTTPPVVQPPTTVAPPQAS) is disordered. The segment covering 679–689 (PPTTVAPPQAS) has biased composition (low complexity). The region spanning 688 to 724 (ASQTLWGQCGGQGWTGPTLCPANSVCRESNQWYSQCV) is the CBM1 domain.

It belongs to the sugar dehydrogenase AA12 family. Requires Ca(2+) as cofactor. The cofactor is pyrroloquinoline quinone. Heme b serves as cofactor.

Its subcellular location is the secreted. Its function is as follows. Pyrroloquinoline quinone (PPQ)-dependent oxidoreductase that catalyzes the oxidation of various sugars including L-galactose, L-gulose, D-talose, D-arabinose, D-lyxose, L-fucose and D-glucosone. Shows significant activity toward the reverse-chair conformation of pyranoses. Shows little or no activity toward abundant sugars such as D-glucose, D-fructose, cellobiose, as well L-xylose and L-glucose. This enzyme is able to direct electrical communication with electrodes, without artificial electron mediators, thus allowing direct electron transfer (DET)-type bioelectrocatalysis. Exhibits binding affinity for insoluble cellulose. PDH does not oxidize cello-oligosaccharides but is able to activate the C-1-oxidizing Neurospora crassa LPMO9F and the C-4-oxidizing Neurospora crassa LPMO9C thanks to the electron-tranfer activity of the cytochrome domain and the localization of PDH in the vicinity of the LPMO substrates by the CBM1 domain. This chain is Pyrroloquinoline quinone-dependent pyranose dehydrogenase, found in Coprinopsis cinerea (strain Okayama-7 / 130 / ATCC MYA-4618 / FGSC 9003) (Inky cap fungus).